A 119-amino-acid polypeptide reads, in one-letter code: Small ribosomal subunit protein bS16 (119 aa).

Over residues 96 to 107 (RKKRRAYRQRRS) the composition is skewed to basic residues. The disordered stretch occupies residues 96 to 119 (RKKRRAYRQRRSTQREEAAKDATK). The span at 108-119 (TQREEAAKDATK) shows a compositional bias: basic and acidic residues.

Belongs to the bacterial ribosomal protein bS16 family.

The polypeptide is Small ribosomal subunit protein bS16 (Chlamydia pneumoniae (Chlamydophila pneumoniae)).